A 133-amino-acid chain; its full sequence is Phosphoribosyl-AMP cyclohydrolase (133 aa).

D90 lines the Mg(2+) pocket. Zn(2+) is bound at residue C91. Residues D92 and D94 each contribute to the Mg(2+) site. Zn(2+) is bound by residues C107 and C114.

It belongs to the PRA-CH family. As to quaternary structure, homodimer. Mg(2+) is required as a cofactor. The cofactor is Zn(2+).

It localises to the cytoplasm. It carries out the reaction 1-(5-phospho-beta-D-ribosyl)-5'-AMP + H2O = 1-(5-phospho-beta-D-ribosyl)-5-[(5-phospho-beta-D-ribosylamino)methylideneamino]imidazole-4-carboxamide. Its pathway is amino-acid biosynthesis; L-histidine biosynthesis; L-histidine from 5-phospho-alpha-D-ribose 1-diphosphate: step 3/9. In terms of biological role, catalyzes the hydrolysis of the adenine ring of phosphoribosyl-AMP. In Streptomyces avermitilis (strain ATCC 31267 / DSM 46492 / JCM 5070 / NBRC 14893 / NCIMB 12804 / NRRL 8165 / MA-4680), this protein is Phosphoribosyl-AMP cyclohydrolase.